Consider the following 570-residue polypeptide: Urease subunit alpha (570 aa).

Residues 131 to 570 (GGMDSHIHFI…LPMAQRYFLF (440 aa)) form the Urease domain. The Ni(2+) site is built by histidine 136, histidine 138, and lysine 219. Position 219 is an N6-carboxylysine (lysine 219). Histidine 221 is a substrate binding site. Residues histidine 248 and histidine 274 each coordinate Ni(2+). Histidine 322 functions as the Proton donor in the catalytic mechanism. Aspartate 362 serves as a coordination point for Ni(2+).

The protein belongs to the metallo-dependent hydrolases superfamily. Urease alpha subunit family. Heterotrimer of UreA (gamma), UreB (beta) and UreC (alpha) subunits. Three heterotrimers associate to form the active enzyme. Ni cation is required as a cofactor. In terms of processing, carboxylation allows a single lysine to coordinate two nickel ions.

Its subcellular location is the cytoplasm. The catalysed reaction is urea + 2 H2O + H(+) = hydrogencarbonate + 2 NH4(+). It participates in nitrogen metabolism; urea degradation; CO(2) and NH(3) from urea (urease route): step 1/1. This is Urease subunit alpha from Rhizobium leguminosarum bv. trifolii (strain WSM2304).